We begin with the raw amino-acid sequence, 342 residues long: MEPAFGEVNQLGGVFVNGRPLPNAIRLRIVELAQLGIRPCDISRQLRVSHGCVSKILARYNETGSILPGAIGGSKPRVTTPTVVKHIRTYKQRDPGIFAWEIRDRLLADGVCDKYNVPSVSSISRILRNKIGNLAQQGHYDSYKQHQPAPQPALPYNHIYSYPSPITAAAAKVPTPPGVPAIPGSVALPRTWPSSHSVTDILGIRSITDQGVSDSSPYHSPKVEEWSSLGRNNFPAAAPHAVNGLEKGALEQEAKYGQAPNGLPAVSSFVSASSMAPYPTPAQVSPYMTYSAAPSGYVAGHGWQHAGSTPLSPHNCDIPASLAFKGMQAAREGSHSVTASAL.

The segment at residues 4-130 is a DNA-binding region (paired); the sequence is AFGEVNQLGG…SSISRILRNK (127 aa). Residues 7 to 63 form a PAI subdomain region; the sequence is EVNQLGGVFVNGRPLPNAIRLRIVELAQLGIRPCDISRQLRVSHGCVSKILARYNET. The tract at residues 82-130 is RED subdomain; it reads TVVKHIRTYKQRDPGIFAWEIRDRLLADGVCDKYNVPSVSSISRILRNK. Residues 168-189 are interaction with KDM5B; the sequence is AAAAKVPTPPGVPAIPGSVALP.

As to quaternary structure, interacts with KDM5B. In the embryo, expressed in pharyngeal pouches and derivatives, developing vertebral column, tail, head and limbs.

The protein localises to the nucleus. Its function is as follows. Transcription factor required for normal development of thymus, parathyroid glands, ultimobranchial bodies, teeth, skeletal elements of skull and larynx as well as distal limbs. In Mus musculus (Mouse), this protein is Paired box protein Pax-9 (Pax9).